We begin with the raw amino-acid sequence, 478 residues long: MEILDMTVEQLRNAILDKHLKSEDIVKAYFDNIKRNEPEINAYITLCEDYALKEAKDVDKKIANGDKVGRLAGIPIAIKDNICTDGIKTTCASKMLYDFVPPYDATVIKKLKAEDAIIIGKVNMDEFAMGSSTENSAFKITKNPRDITRVPGGSSGGSAAVVAAKMAPISLGSDTGGSIRQPAAFCGVVGLKPTYGLVSRFGLIAFASSLDQIGPLGKTVKDCAELLEVISGEDELDNTSSKKHEKEDYLEGIDDGIKGMKIGMPKEFLNDGLDPEIRKCIDDTIEKLKSLGAEVCEMSLPITEEGLSAYYIISSAEASSNLARFDGIRYGYRPDDFEDVYDLMETSRSEAFGDEVKRRIMLGTYALSSGYYDAYYKRALKLKKKIKNEFKEAFENYDLILSPVSPVLPFKIGEKKADPLQMYLADIYTVNINLAGIPAISLPCSVSKEGLPIGLQLLGPHFGEKKIFRAARALEKER.

Residues Lys-79 and Ser-154 each act as charge relay system in the active site. The active-site Acyl-ester intermediate is the Ser-178.

It belongs to the amidase family. GatA subfamily. In terms of assembly, heterotrimer of A, B and C subunits.

The catalysed reaction is L-glutamyl-tRNA(Gln) + L-glutamine + ATP + H2O = L-glutaminyl-tRNA(Gln) + L-glutamate + ADP + phosphate + H(+). In terms of biological role, allows the formation of correctly charged Gln-tRNA(Gln) through the transamidation of misacylated Glu-tRNA(Gln) in organisms which lack glutaminyl-tRNA synthetase. The reaction takes place in the presence of glutamine and ATP through an activated gamma-phospho-Glu-tRNA(Gln). The sequence is that of Glutamyl-tRNA(Gln) amidotransferase subunit A 2 (gatA2) from Clostridium acetobutylicum (strain ATCC 824 / DSM 792 / JCM 1419 / IAM 19013 / LMG 5710 / NBRC 13948 / NRRL B-527 / VKM B-1787 / 2291 / W).